A 160-amino-acid polypeptide reads, in one-letter code: Large ribosomal subunit protein eL21 (160 aa).

2 stretches are compositionally biased toward basic and acidic residues: residues asparagine 112 to glycine 123 and arginine 136 to glycine 145. The segment at asparagine 112 to glycine 145 is disordered.

It belongs to the eukaryotic ribosomal protein eL21 family. In terms of assembly, component of the large ribosomal subunit.

Its subcellular location is the cytoplasm. The protein localises to the cytosol. It is found in the endoplasmic reticulum. Functionally, component of the large ribosomal subunit. The ribosome is a large ribonucleoprotein complex responsible for the synthesis of proteins in the cell. The protein is Large ribosomal subunit protein eL21 (RPL21) of Oryctolagus cuniculus (Rabbit).